A 357-amino-acid polypeptide reads, in one-letter code: UDP-N-acetylglucosamine--N-acetylmuramyl-(pentapeptide) pyrophosphoryl-undecaprenol N-acetylglucosamine transferase (357 aa).

Residues 12 to 14 (TAG), Arg-166, Ser-196, and Gln-291 each bind UDP-N-acetyl-alpha-D-glucosamine.

It belongs to the glycosyltransferase 28 family. MurG subfamily.

The protein resides in the cell membrane. The catalysed reaction is di-trans,octa-cis-undecaprenyl diphospho-N-acetyl-alpha-D-muramoyl-L-alanyl-D-glutamyl-meso-2,6-diaminopimeloyl-D-alanyl-D-alanine + UDP-N-acetyl-alpha-D-glucosamine = di-trans,octa-cis-undecaprenyl diphospho-[N-acetyl-alpha-D-glucosaminyl-(1-&gt;4)]-N-acetyl-alpha-D-muramoyl-L-alanyl-D-glutamyl-meso-2,6-diaminopimeloyl-D-alanyl-D-alanine + UDP + H(+). It participates in cell wall biogenesis; peptidoglycan biosynthesis. Cell wall formation. Catalyzes the transfer of a GlcNAc subunit on undecaprenyl-pyrophosphoryl-MurNAc-pentapeptide (lipid intermediate I) to form undecaprenyl-pyrophosphoryl-MurNAc-(pentapeptide)GlcNAc (lipid intermediate II). This Geobacillus kaustophilus (strain HTA426) protein is UDP-N-acetylglucosamine--N-acetylmuramyl-(pentapeptide) pyrophosphoryl-undecaprenol N-acetylglucosamine transferase.